The sequence spans 152 residues: uncharacterized protein (152 aa).

The helical transmembrane segment at 12-34 (ALLYLGGGLLAMIYGLITFFMAF) threads the bilayer.

To B.subtilis YfjD.

The protein localises to the membrane. This is an uncharacterized protein from Bacillus subtilis (strain 168).